A 119-amino-acid polypeptide reads, in one-letter code: Ribosome-binding factor A (119 aa).

The protein belongs to the RbfA family. Monomer. Binds 30S ribosomal subunits, but not 50S ribosomal subunits or 70S ribosomes.

Its subcellular location is the cytoplasm. Its function is as follows. One of several proteins that assist in the late maturation steps of the functional core of the 30S ribosomal subunit. Associates with free 30S ribosomal subunits (but not with 30S subunits that are part of 70S ribosomes or polysomes). Required for efficient processing of 16S rRNA. May interact with the 5'-terminal helix region of 16S rRNA. The sequence is that of Ribosome-binding factor A from Chlorobium phaeovibrioides (strain DSM 265 / 1930) (Prosthecochloris vibrioformis (strain DSM 265)).